We begin with the raw amino-acid sequence, 287 residues long: 4-hydroxybenzoate octaprenyltransferase (287 aa).

9 helical membrane-spanning segments follow: residues 7–27 (FISY…LLLW), 30–50 (LWAL…LIFV), 94–114 (VAVA…LNAF), 118–138 (LSVL…FFAM), 142–162 (VLGI…LDFI), 167–187 (WFLF…YAMV), 209–229 (VVVI…VAQL), 235–255 (YFLV…KLVS), and 266–286 (FRHN…GLGV).

The protein belongs to the UbiA prenyltransferase family. Mg(2+) serves as cofactor.

It localises to the cell inner membrane. It carries out the reaction all-trans-octaprenyl diphosphate + 4-hydroxybenzoate = 4-hydroxy-3-(all-trans-octaprenyl)benzoate + diphosphate. It participates in cofactor biosynthesis; ubiquinone biosynthesis. In terms of biological role, catalyzes the prenylation of para-hydroxybenzoate (PHB) with an all-trans polyprenyl group. Mediates the second step in the final reaction sequence of ubiquinone-8 (UQ-8) biosynthesis, which is the condensation of the polyisoprenoid side chain with PHB, generating the first membrane-bound Q intermediate 3-octaprenyl-4-hydroxybenzoate. The chain is 4-hydroxybenzoate octaprenyltransferase from Polynucleobacter necessarius subsp. necessarius (strain STIR1).